A 500-amino-acid polypeptide reads, in one-letter code: Zinc finger protein PLAG1 (500 aa).

Positions 1–30 (MATVIPGDLSEVRDTQKVPSGKRKRGETKP) are disordered. The segment at 2 to 84 (ATVIPGDLSE…SKYKLQRHMA (83 aa)) is interaction with KPNA2. Positions 22–25 (KRKR) match the Nuclear localization signal motif. C2H2-type zinc fingers lie at residues 34-56 (FPCQLCDKAFNSVEKLKVHSYSH), 62-86 (YKCIQQDCTKAFVSKYKLQRHMATH), 92-114 (HKCNYCEKMFHRKDHLKNHLHTH), 121-143 (FKCEECGKNYNTKLGFKRHLALH), 150-172 (LTCKVCLQTFESTGVLLEHLKSH), 185-207 (HQCEHCDRRFYTRKDVRRHMVVH), and 213-236 (FLCQYCAQRFGRKDHLTRHMKKSH). Residues 41-242 (KAFNSVEKLK…KKSHNQELLK (202 aa)) form a decreased nuclear import with localization in the nucleus but also in the cytoplasm region. Residues 243–384 (VKTEPVDFLD…QASSSSKLGL (142 aa)) form a repression domain; contains 3 sumoylation motifs and massively decrease transcription activity region. The segment at 243–500 (VKTEPVDFLD…TLPRFHQAFQ (258 aa)) is activates transcription; Inhibition of nuclear import due to lack of NLS and KPNA2 interaction. Residues K244 and K263 each participate in a glycyl lysine isopeptide (Lys-Gly) (interchain with G-Cter in SUMO) cross-link. The tract at residues 365–388 (GGVPSSSQDSQASSSSKLGLDPQI) is disordered. A compositionally biased stretch (low complexity) spans 369-380 (SSSQDSQASSSS). The massively activates transcription stretch occupies residues 385 to 500 (DPQIGSLDDG…TLPRFHQAFQ (116 aa)).

This sequence belongs to the krueppel C2H2-type zinc-finger protein family. In terms of assembly, interacts with KPNA2, which escorts protein to the nucleus via interaction with nuclear localization signal. Interacts with E3 SUMO-protein ligase PIAS1, PIAS2 and PIAS4. Sumoylated with SUMO1; which inhibits transcriptional activity, but does not affect nuclear localization. Blockers of sumoylation pathway such as SENP3 and inactive UBE2I increases transcriptional capacity. Sumoylation is increased in the presence of PIAS1. Post-translationally, acetylated by lysine acetyltransferase EP300; which activates transcriptional capacity. Lysine residues that are sumoylated also seem to be target for acetylation. Expressed in fetal tissues such as lung, liver and kidney. Not detected or weak detection in normal adult tissues, but highly expressed in salivary gland with benign or malignant pleiomorphic adenomas with or without 8q12 aberrations, with preferential occurrence in benign tumors.

It localises to the nucleus. Functionally, transcription factor whose activation results in up-regulation of target genes, such as IGFII, leading to uncontrolled cell proliferation: when overexpressed in cultured cells, higher proliferation rate and transformation are observed. Other target genes such as CRLF1, CRABP2, CRIP2, PIGF are strongly induced in cells with PLAG1 induction. Proto-oncogene whose ectopic expression can trigger the development of pleomorphic adenomas of the salivary gland and lipoblastomas. Overexpression is associated with up-regulation of IGFII, is frequently observed in hepatoblastoma, common primary liver tumor in childhood. Cooperates with CBFB-MYH11, a fusion gene important for myeloid leukemia. The protein is Zinc finger protein PLAG1 (PLAG1) of Homo sapiens (Human).